The sequence spans 140 residues: Endoribonuclease YbeY (140 aa).

Positions 100, 104, and 110 each coordinate Zn(2+).

Belongs to the endoribonuclease YbeY family. It depends on Zn(2+) as a cofactor.

It localises to the cytoplasm. Its function is as follows. Single strand-specific metallo-endoribonuclease involved in late-stage 70S ribosome quality control and in maturation of the 3' terminus of the 16S rRNA. The sequence is that of Endoribonuclease YbeY from Helicobacter pylori (strain ATCC 700392 / 26695) (Campylobacter pylori).